The primary structure comprises 120 residues: NAD(P)H-quinone oxidoreductase subunit 3, chloroplastic (120 aa).

The next 3 membrane-spanning stretches (helical) occupy residues 9–29, 64–84, and 88–108; these read IFWAFLIISSAIPVLAFLISG, MFALVFVVFDVETVFLYPWAM, and VLGVSAFIEAFIFVLILILGL.

It belongs to the complex I subunit 3 family. As to quaternary structure, NDH is composed of at least 16 different subunits, 5 of which are encoded in the nucleus.

Its subcellular location is the plastid. It localises to the chloroplast thylakoid membrane. The enzyme catalyses a plastoquinone + NADH + (n+1) H(+)(in) = a plastoquinol + NAD(+) + n H(+)(out). It carries out the reaction a plastoquinone + NADPH + (n+1) H(+)(in) = a plastoquinol + NADP(+) + n H(+)(out). Functionally, NDH shuttles electrons from NAD(P)H:plastoquinone, via FMN and iron-sulfur (Fe-S) centers, to quinones in the photosynthetic chain and possibly in a chloroplast respiratory chain. The immediate electron acceptor for the enzyme in this species is believed to be plastoquinone. Couples the redox reaction to proton translocation, and thus conserves the redox energy in a proton gradient. This chain is NAD(P)H-quinone oxidoreductase subunit 3, chloroplastic, found in Capsella bursa-pastoris (Shepherd's purse).